We begin with the raw amino-acid sequence, 110 residues long: UPF0060 membrane protein Pnap_4944 (110 aa).

4 helical membrane-spanning segments follow: residues 8 to 28, 33 to 53, 65 to 85, and 88 to 108; these read ILFAVTALAEIVGCYLPWLVL, SLLLLVPAAMSLGLFAWLLTL, YGGMYIAVALGWLRFVDGIAL, and WDLSGAAIALVGMAVIVMQPS.

This sequence belongs to the UPF0060 family.

The protein localises to the cell inner membrane. The polypeptide is UPF0060 membrane protein Pnap_4944 (Polaromonas naphthalenivorans (strain CJ2)).